The primary structure comprises 250 residues: Probable xyloglucan-specific endo-beta-1,4-glucanase A (250 aa).

The signal sequence occupies residues 1-19 (MKLSVLSLASLASAAALNA). An N-linked (GlcNAc...) asparagine glycan is attached at Asn72.

It belongs to the glycosyl hydrolase 12 (cellulase H) family.

Its subcellular location is the secreted. The enzyme catalyses xyloglucan + H2O = xyloglucan oligosaccharides.. Catalyzes endohydrolysis of 1,4-beta-D-glucosidic linkages in xyloglucan with retention of the beta-configuration of the glycosyl residues. Specific for xyloglucan and does not hydrolyze other cell wall components. The sequence is that of Probable xyloglucan-specific endo-beta-1,4-glucanase A (xgeA) from Aspergillus terreus (strain NIH 2624 / FGSC A1156).